A 776-amino-acid polypeptide reads, in one-letter code: Transcriptional regulator QRICH1 (776 aa).

Met-1 bears the N-acetylmethionine mark. The CARD domain maps to 6–48; that stretch reads ENTISFEEYIRVKARSVPQHRMKEFLDSLASKGPEALQEFQQT. Disordered regions lie at residues 139-164 and 218-240; these read IQGQ…PSQL and ALSP…GTAS. Ser-345 is modified (phosphoserine). Glycyl lysine isopeptide (Lys-Gly) (interchain with G-Cter in SUMO2) cross-links involve residues Lys-353 and Lys-358. Residues 419–429 show a composition bias toward low complexity; that stretch reads QQQPQQQTPQE. The interval 419-441 is disordered; sequence QQQPQQQTPQEQTPPPQQQQQQL. Ser-464 is modified (phosphoserine).

Its subcellular location is the nucleus. The protein resides in the cytoplasm. It is found in the cell membrane. Transcriptional regulator that acts as a mediator of the integrated stress response (ISR) through transcriptional control of protein homeostasis under conditions of ER stress. Controls the outcome of the unfolded protein response (UPR) which is an ER-stress response pathway. ER stress induces QRICH1 translation by a ribosome translation re-initiation mechanism in response to EIF2S1/eIF-2-alpha phosphorylation, and stress-induced QRICH1 regulates a transcriptional program associated with protein translation, protein secretion-mediated proteotoxicity and cell death during the terminal UPR. May cooperate with ATF4 transcription factor signaling to regulate ER homeostasis which is critical for cell viability. Up-regulates CASP3/caspase-3 activity in epithelial cells under ER stress. Central regulator of proteotoxicity associated with ER stress-mediated inflammatory diseases in the intestines and liver. Involved in chondrocyte hypertrophy, a process required for normal longitudinal bone growth. This is Transcriptional regulator QRICH1 from Homo sapiens (Human).